Consider the following 802-residue polypeptide: Vacuolar membrane protease (802 aa).

At 1-13 (MARYNPLAFTSGP) the chain is on the cytoplasmic side. Residues 14–34 (VVFFITITYTALLIALLLTHL) traverse the membrane as a helical segment. Over 35–357 (TLPSYPSHPP…KVFIVFQLHT (323 aa)) the chain is Vacuolar. Residues asparagine 48, asparagine 102, asparagine 105, and asparagine 112 are each glycosylated (N-linked (GlcNAc...) asparagine). Zn(2+) is bound by residues histidine 152 and aspartate 164. The active-site Proton acceptor is glutamate 198. 3 residues coordinate Zn(2+): glutamate 199, glutamate 224, and histidine 297. The helical transmembrane segment at 358-378 (FFALCVTLLVVAPLTLIGLAW) threads the bilayer. Over 379–389 (SLHKADRNYLF) the chain is Cytoplasmic. The chain crosses the membrane as a helical span at residues 390-409 (ARKAFVYSADDDEPIHLYGW). Residues 410-423 (RGFFRFPIAFGIAT) are Vacuolar-facing. The chain crosses the membrane as a helical span at residues 424 to 444 (SIVVGLAMMLSAWFAVSWFLL). The Cytoplasmic segment spans residues 445–457 (HGADAMRPSALQR). A helical transmembrane segment spans residues 458–478 (MYSLLWLFIGSFCLLVFFTIL). The Vacuolar portion of the chain corresponds to 479 to 490 (ANNHQVAAGYPS). Residues 491–511 (LFCFATVFLANVLSFLELFLA) form a helical membrane-spanning segment. Topologically, residues 512–609 (PPKSAYAWNV…EQEWSGKLPS (98 aa)) are cytoplasmic. Disordered stretches follow at residues 528 to 554 (GSRP…ATET) and 570 to 603 (AGRR…EQEW). Residues 610–630 (WIWIVQFSLLAPMIVILVGQI) form a helical membrane-spanning segment. Residues 631 to 649 (ALLLTSALYQTPSDGNSPL) are Vacuolar-facing. The chain crosses the membrane as a helical span at residues 650 to 670 (YIYTSIAALAVFLVAPIGPFI). Residues 671-677 (HRFTHHV) are Cytoplasmic-facing. Residues 678–698 (PTFLFLLCVATTIYNLVAFPF) form a helical membrane-spanning segment. The Vacuolar portion of the chain corresponds to 699–802 (SEQHKLKVYF…HDDSNNRGRR (104 aa)). N-linked (GlcNAc...) asparagine glycosylation is found at asparagine 746 and asparagine 779.

It belongs to the peptidase M28 family. Requires Zn(2+) as cofactor.

Its subcellular location is the vacuole membrane. In terms of biological role, may be involved in vacuolar sorting and osmoregulation. The protein is Vacuolar membrane protease of Leptosphaeria maculans (strain JN3 / isolate v23.1.3 / race Av1-4-5-6-7-8) (Blackleg fungus).